A 115-amino-acid chain; its full sequence is Large ribosomal subunit protein bL31B (115 aa).

The protein belongs to the bacterial ribosomal protein bL31 family. Type B subfamily. In terms of assembly, part of the 50S ribosomal subunit.

The protein is Large ribosomal subunit protein bL31B of Polynucleobacter necessarius subsp. necessarius (strain STIR1).